The primary structure comprises 467 residues: Programmed cell death protein 4 (467 aa).

2 disordered regions span residues 21 to 43 and 57 to 124; these read ALFS…NGNW and KAKR…VWGT. A Nuclear localization signal motif is present at residues 57–63; sequence KAKRRLR. The segment covering 112–123 has biased composition (gly residues); that stretch reads KKGGAGGKGVWG. MI domains are found at residues 161 to 282 and 324 to 447; these read AFEK…GYKG and HLVK…LCPS. The Nuclear localization signal signature appears at 446–452; that stretch reads PSRGRKR.

Belongs to the PDCD4 family. Interacts with EIF4A. Expressed in a broad spectrum of hematopoietic organs, such as thymus and bursa. Lower levels of expression detected in the kidney.

Its subcellular location is the nucleus. It localises to the cytoplasm. Inhibits translation initiation and cap-dependent translation. May excert its function by hindering the interaction between EIF4A and EIF4G. Inhibits the helicase activity of EIF4A. Binds RNA. Does not seem to be involved in apoptosis. This chain is Programmed cell death protein 4 (PDCD4), found in Gallus gallus (Chicken).